The following is a 248-amino-acid chain: Probable transcriptional regulatory protein PSPPH_3775 (248 aa).

It belongs to the TACO1 family.

The protein localises to the cytoplasm. The sequence is that of Probable transcriptional regulatory protein PSPPH_3775 from Pseudomonas savastanoi pv. phaseolicola (strain 1448A / Race 6) (Pseudomonas syringae pv. phaseolicola (strain 1448A / Race 6)).